Consider the following 141-residue polypeptide: Nucleoside diphosphate kinase (141 aa).

ATP is bound by residues Lys11, Phe59, Arg87, Thr93, Arg104, and Asn114. His117 (pros-phosphohistidine intermediate) is an active-site residue.

Belongs to the NDK family. Homotetramer. It depends on Mg(2+) as a cofactor.

It is found in the cytoplasm. It catalyses the reaction a 2'-deoxyribonucleoside 5'-diphosphate + ATP = a 2'-deoxyribonucleoside 5'-triphosphate + ADP. The enzyme catalyses a ribonucleoside 5'-diphosphate + ATP = a ribonucleoside 5'-triphosphate + ADP. Major role in the synthesis of nucleoside triphosphates other than ATP. The ATP gamma phosphate is transferred to the NDP beta phosphate via a ping-pong mechanism, using a phosphorylated active-site intermediate. The chain is Nucleoside diphosphate kinase from Legionella pneumophila subsp. pneumophila (strain Philadelphia 1 / ATCC 33152 / DSM 7513).